Reading from the N-terminus, the 198-residue chain is uncharacterized protein (198 aa).

This is an uncharacterized protein from Acheta domesticus (House cricket).